We begin with the raw amino-acid sequence, 122 residues long: Large ribosomal subunit protein uL14 (122 aa).

Belongs to the universal ribosomal protein uL14 family. In terms of assembly, part of the 50S ribosomal subunit. Forms a cluster with proteins L3 and L19. In the 70S ribosome, L14 and L19 interact and together make contacts with the 16S rRNA in bridges B5 and B8.

In terms of biological role, binds to 23S rRNA. Forms part of two intersubunit bridges in the 70S ribosome. This is Large ribosomal subunit protein uL14 from Fusobacterium nucleatum subsp. nucleatum (strain ATCC 25586 / DSM 15643 / BCRC 10681 / CIP 101130 / JCM 8532 / KCTC 2640 / LMG 13131 / VPI 4355).